The following is a 233-amino-acid chain: 2-C-methyl-D-erythritol 4-phosphate cytidylyltransferase (233 aa).

Belongs to the IspD/TarI cytidylyltransferase family. IspD subfamily.

It carries out the reaction 2-C-methyl-D-erythritol 4-phosphate + CTP + H(+) = 4-CDP-2-C-methyl-D-erythritol + diphosphate. It participates in isoprenoid biosynthesis; isopentenyl diphosphate biosynthesis via DXP pathway; isopentenyl diphosphate from 1-deoxy-D-xylulose 5-phosphate: step 2/6. Functionally, catalyzes the formation of 4-diphosphocytidyl-2-C-methyl-D-erythritol from CTP and 2-C-methyl-D-erythritol 4-phosphate (MEP). This chain is 2-C-methyl-D-erythritol 4-phosphate cytidylyltransferase, found in Carboxydothermus hydrogenoformans (strain ATCC BAA-161 / DSM 6008 / Z-2901).